Here is an 859-residue protein sequence, read N- to C-terminus: Leucine--tRNA ligase (859 aa).

The short motif at 42–52 (PYPSGRLHMGH) is the 'HIGH' region element. Residues 618-622 (KMSKS) carry the 'KMSKS' region motif. An ATP-binding site is contributed by lysine 621.

This sequence belongs to the class-I aminoacyl-tRNA synthetase family.

The protein resides in the cytoplasm. It catalyses the reaction tRNA(Leu) + L-leucine + ATP = L-leucyl-tRNA(Leu) + AMP + diphosphate. The protein is Leucine--tRNA ligase of Shewanella pealeana (strain ATCC 700345 / ANG-SQ1).